The sequence spans 170 residues: Crossover junction endodeoxyribonuclease RuvC (170 aa).

Residues aspartate 9, glutamate 70, and aspartate 145 contribute to the active site. Positions 9, 70, and 145 each coordinate Mg(2+).

It belongs to the RuvC family. In terms of assembly, homodimer which binds Holliday junction (HJ) DNA. The HJ becomes 2-fold symmetrical on binding to RuvC with unstacked arms; it has a different conformation from HJ DNA in complex with RuvA. In the full resolvosome a probable DNA-RuvA(4)-RuvB(12)-RuvC(2) complex forms which resolves the HJ. Mg(2+) serves as cofactor.

It localises to the cytoplasm. It catalyses the reaction Endonucleolytic cleavage at a junction such as a reciprocal single-stranded crossover between two homologous DNA duplexes (Holliday junction).. In terms of biological role, the RuvA-RuvB-RuvC complex processes Holliday junction (HJ) DNA during genetic recombination and DNA repair. Endonuclease that resolves HJ intermediates. Cleaves cruciform DNA by making single-stranded nicks across the HJ at symmetrical positions within the homologous arms, yielding a 5'-phosphate and a 3'-hydroxyl group; requires a central core of homology in the junction. The consensus cleavage sequence is 5'-(A/T)TT(C/G)-3'. Cleavage occurs on the 3'-side of the TT dinucleotide at the point of strand exchange. HJ branch migration catalyzed by RuvA-RuvB allows RuvC to scan DNA until it finds its consensus sequence, where it cleaves and resolves the cruciform DNA. In Chlamydia muridarum (strain MoPn / Nigg), this protein is Crossover junction endodeoxyribonuclease RuvC.